The sequence spans 477 residues: Trigger factor (477 aa).

In terms of domain architecture, PPIase FKBP-type spans 169-254 (EDRVTIDYLG…VKEVAKPNEL (86 aa)). Positions 435 to 477 (VSKEELTAEDEDAASEAKPAKKAAPKKKAAPKKKADEGKSEEA) are disordered. A compositionally biased stretch (basic residues) spans 454–466 (AKKAAPKKKAAPK). The span at 467-477 (KKADEGKSEEA) shows a compositional bias: basic and acidic residues.

Belongs to the FKBP-type PPIase family. Tig subfamily.

It is found in the cytoplasm. It catalyses the reaction [protein]-peptidylproline (omega=180) = [protein]-peptidylproline (omega=0). Involved in protein export. Acts as a chaperone by maintaining the newly synthesized protein in an open conformation. Functions as a peptidyl-prolyl cis-trans isomerase. The polypeptide is Trigger factor (Brucella anthropi (strain ATCC 49188 / DSM 6882 / CCUG 24695 / JCM 21032 / LMG 3331 / NBRC 15819 / NCTC 12168 / Alc 37) (Ochrobactrum anthropi)).